A 485-amino-acid polypeptide reads, in one-letter code: Arginine/agmatine antiporter (485 aa).

The next 12 membrane-spanning stretches (helical) occupy residues 12-34 (GTIA…SLPQ), 38-60 (ATAG…FFIA), 89-111 (IGFT…YAVI), 126-148 (GGNT…FIVL), 155-177 (SIIN…ILTA), 211-230 (TMLV…VMSG), 243-265 (VLGF…GSLF), 291-313 (VLMN…IIVA), 363-385 (WNTM…AAFL), 400-422 (IKAP…LIYA), 427-446 (YLFM…IDAG), and 461-483 (IVGM…TGRI).

Belongs to the amino acid-polyamine-organocation (APC) superfamily. Basic amino acid/polyamine antiporter (APA) (TC 2.A.3.2) family.

Its subcellular location is the cell inner membrane. Catalyzes the exchange of L-arginine for agmatine. The arginine uptake by the bacterium in the macrophage may be a virulence factor against the host innate immune response. In Chlamydia pneumoniae (Chlamydophila pneumoniae), this protein is Arginine/agmatine antiporter (aaxC).